The sequence spans 135 residues: Large ribosomal subunit protein uL16c (135 aa).

It belongs to the universal ribosomal protein uL16 family. As to quaternary structure, part of the 50S ribosomal subunit.

It localises to the plastid. The protein localises to the chloroplast. This chain is Large ribosomal subunit protein uL16c, found in Aethionema cordifolium (Lebanon stonecress).